A 180-amino-acid chain; its full sequence is Small ribosomal subunit protein bS21c (180 aa).

The transit peptide at 1 to 79 (MASTSSLLNF…PSLAFSNTLY (79 aa)) directs the protein to the chloroplast. The segment covering 14 to 45 (LFPSNTSLPPSSNPKFPNPNSLSSQQNSISIS) has biased composition (low complexity). 2 disordered regions span residues 14–49 (LFPS…SKKH) and 124–180 (NKQE…GAPF). A compositionally biased stretch (basic residues) spans 130–147 (KRKHREAAKRNSRRRRGP). Residues 154-166 (GKEEATKVDKKED) are compositionally biased toward basic and acidic residues.

Component of the chloroplast small ribosomal subunit (SSU). Mature 70S chloroplast ribosomes of higher plants consist of a small (30S) and a large (50S) subunit. The 30S small subunit contains 1 molecule of ribosomal RNA (16S rRNA) and 24 different proteins. The 50S large subunit contains 3 rRNA molecules (23S, 5S and 4.5S rRNA) and 33 different proteins. bS21c binds directly to 16S ribosomal RNA.

The protein localises to the plastid. The protein resides in the chloroplast. Component of the chloroplast ribosome (chloro-ribosome), a dedicated translation machinery responsible for the synthesis of chloroplast genome-encoded proteins, including proteins of the transcription and translation machinery and components of the photosynthetic apparatus. The chain is Small ribosomal subunit protein bS21c (rps21) from Spinacia oleracea (Spinach).